The primary structure comprises 457 residues: Chromosomal replication initiator protein DnaA (457 aa).

A domain I, interacts with DnaA modulators region spans residues 1–75; sequence MDAQLNNLWE…ALKIVTSRKF (75 aa). Residues 75–118 form a domain II region; that stretch reads FKIEFYLESDLEEEKENEEKQKEEKKENTNDVDGSIVVSDEMSA. Residues 119–335 are domain III, AAA+ region; sequence TLNPKYTFQS…GALIRIIAYS (217 aa). ATP contacts are provided by glycine 163, glycine 165, lysine 166, and threonine 167. The domain IV, binds dsDNA stretch occupies residues 336–457; it reads SLTNRDVSVD…NDITKKLTQK (122 aa).

The protein belongs to the DnaA family. As to quaternary structure, oligomerizes as a right-handed, spiral filament on DNA at oriC.

The protein localises to the cytoplasm. Its function is as follows. Plays an essential role in the initiation and regulation of chromosomal replication. ATP-DnaA binds to the origin of replication (oriC) to initiate formation of the DNA replication initiation complex once per cell cycle. Binds the DnaA box (a 9 base pair repeat at the origin) and separates the double-stranded (ds)DNA. Forms a right-handed helical filament on oriC DNA; dsDNA binds to the exterior of the filament while single-stranded (ss)DNA is stabiized in the filament's interior. The ATP-DnaA-oriC complex binds and stabilizes one strand of the AT-rich DNA unwinding element (DUE), permitting loading of DNA polymerase. After initiation quickly degrades to an ADP-DnaA complex that is not apt for DNA replication. Binds acidic phospholipids. The protein is Chromosomal replication initiator protein DnaA of Clostridium perfringens (strain ATCC 13124 / DSM 756 / JCM 1290 / NCIMB 6125 / NCTC 8237 / Type A).